The sequence spans 305 residues: ADP,ATP carrier protein (305 aa).

Solcar repeat units lie at residues 8–101, 112–204, and 212–298; these read SNFA…IKAM, KWFA…LKPL, and NSFL…LQVI. 5 helical membrane-spanning segments follow: residues 10–37, 78–102, 110–130, 180–201, and 215–235; these read FAID…VKLL, TANV…KAMF, YAKW…LSLL, FLPS…YDSL, and LASF…SYPL. ADP contacts are provided by Arg83 and Lys95. Arg239 serves as a coordination point for ADP. Residues 239 to 244 are important for transport activity; the sequence is RRRMMM. The Nucleotide carrier signature motif motif lies at 239-244; the sequence is RRRMMM. Residues 275 to 295 traverse the membrane as a helical segment; the sequence is CGANILRGVAGAGVISMYDQL.

Belongs to the mitochondrial carrier (TC 2.A.29) family. Monomer.

It is found in the mitochondrion inner membrane. It catalyses the reaction ADP(in) + ATP(out) = ADP(out) + ATP(in). With respect to regulation, the matrix-open state (m-state) is inhibited by the membrane-permeable bongkrekic acid (BKA). The cytoplasmic-open state (c-state) is inhibited by the membrane-impermeable toxic inhibitor carboxyatractyloside (CATR). Functionally, ADP:ATP antiporter that mediates import of ADP into the mitochondrial matrix for ATP synthesis, and export of ATP out to fuel the cell. Cycles between the cytoplasmic-open state (c-state) and the matrix-open state (m-state): operates by the alternating access mechanism with a single substrate-binding site intermittently exposed to either the cytosolic (c-state) or matrix (m-state) side of the inner mitochondrial membrane. The sequence is that of ADP,ATP carrier protein (AAC) from Kluyveromyces lactis (strain ATCC 8585 / CBS 2359 / DSM 70799 / NBRC 1267 / NRRL Y-1140 / WM37) (Yeast).